The sequence spans 469 residues: Tetratricopeptide repeat protein 38 (469 aa).

3 TPR repeats span residues 107–140 (REML…HPTD), 179–212 (SYVK…DQTD), and 251–284 (CHVY…QCFA).

Belongs to the TTC38 family.

This Xenopus tropicalis (Western clawed frog) protein is Tetratricopeptide repeat protein 38 (ttc38).